The sequence spans 539 residues: Phosphoenolpyruvate carboxykinase (ATP) (539 aa).

Substrate contacts are provided by R59, Y200, and K206. ATP is bound by residues K206, H225, and 242-250 (GLSGTGKTT). 2 residues coordinate Mn(2+): K206 and H225. D263 provides a ligand contact to Mn(2+). ATP contacts are provided by residues E291, R327, 447–448 (RI), and T453. R327 serves as a coordination point for substrate.

This sequence belongs to the phosphoenolpyruvate carboxykinase (ATP) family. Requires Mn(2+) as cofactor.

It is found in the cytoplasm. It carries out the reaction oxaloacetate + ATP = phosphoenolpyruvate + ADP + CO2. It participates in carbohydrate biosynthesis; gluconeogenesis. In terms of biological role, involved in the gluconeogenesis. Catalyzes the conversion of oxaloacetate (OAA) to phosphoenolpyruvate (PEP) through direct phosphoryl transfer between the nucleoside triphosphate and OAA. The chain is Phosphoenolpyruvate carboxykinase (ATP) from Selenomonas ruminantium.